A 1375-amino-acid polypeptide reads, in one-letter code: ARF guanine-nucleotide exchange factor GNL2 (1375 aa).

Residues 486 to 676 enclose the SEC7 domain; sequence HIRVRKAQKR…SELFQSIATN (191 aa). Glutamate 590 is an active-site residue.

In terms of assembly, homodimer. In terms of tissue distribution, preferentially expressed in mature pollen grains and growing pollen tubes.

The protein localises to the cytoplasm. It localises to the cytosol. It is found in the membrane. Activates the ARF proteins by exchanging bound GDP for free GTP. Plays a role in vesicular protein sorting. Essential for pollen germination. The protein is ARF guanine-nucleotide exchange factor GNL2 (GNL2) of Arabidopsis thaliana (Mouse-ear cress).